We begin with the raw amino-acid sequence, 783 residues long: DNA ligase (783 aa).

NAD(+) contacts are provided by residues aspartate 42–aspartate 46, serine 91–leucine 92, and glutamate 125. The active-site N6-AMP-lysine intermediate is lysine 127. 4 residues coordinate NAD(+): arginine 148, glutamate 185, lysine 302, and lysine 326. Residues cysteine 421, cysteine 423, cysteine 445, and cysteine 451 each coordinate Zn(2+). Positions lysine 705–glycine 783 constitute a BRCT domain.

The protein belongs to the NAD-dependent DNA ligase family. LigA subfamily. The cofactor is Mg(2+). Mn(2+) is required as a cofactor.

The catalysed reaction is NAD(+) + (deoxyribonucleotide)n-3'-hydroxyl + 5'-phospho-(deoxyribonucleotide)m = (deoxyribonucleotide)n+m + AMP + beta-nicotinamide D-nucleotide.. Its function is as follows. DNA ligase that catalyzes the formation of phosphodiester linkages between 5'-phosphoryl and 3'-hydroxyl groups in double-stranded DNA using NAD as a coenzyme and as the energy source for the reaction. It is essential for DNA replication and repair of damaged DNA. This is DNA ligase from Caulobacter vibrioides (strain ATCC 19089 / CIP 103742 / CB 15) (Caulobacter crescentus).